The sequence spans 329 residues: Sulfate/thiosulfate import ATP-binding protein CysA (329 aa).

Residues 3 to 237 (IEIRNVSKNF…PASDFVYHFL (235 aa)) enclose the ABC transporter domain. Residue 35–42 (GPSGCGKT) participates in ATP binding.

It belongs to the ABC transporter superfamily. Sulfate/tungstate importer (TC 3.A.1.6) family. The complex is composed of two ATP-binding proteins (CysA), two transmembrane proteins (CysT and CysW) and a solute-binding protein (CysP).

It is found in the cell inner membrane. The enzyme catalyses sulfate(out) + ATP + H2O = sulfate(in) + ADP + phosphate + H(+). It carries out the reaction thiosulfate(out) + ATP + H2O = thiosulfate(in) + ADP + phosphate + H(+). Part of the ABC transporter complex CysAWTP involved in sulfate/thiosulfate import. Responsible for energy coupling to the transport system. This chain is Sulfate/thiosulfate import ATP-binding protein CysA, found in Pseudomonas aeruginosa (strain ATCC 15692 / DSM 22644 / CIP 104116 / JCM 14847 / LMG 12228 / 1C / PRS 101 / PAO1).